Reading from the N-terminus, the 121-residue chain is Large ribosomal subunit protein bL19 (121 aa).

The protein belongs to the bacterial ribosomal protein bL19 family.

In terms of biological role, this protein is located at the 30S-50S ribosomal subunit interface and may play a role in the structure and function of the aminoacyl-tRNA binding site. The polypeptide is Large ribosomal subunit protein bL19 (Chlorobium phaeovibrioides (strain DSM 265 / 1930) (Prosthecochloris vibrioformis (strain DSM 265))).